Here is a 205-residue protein sequence, read N- to C-terminus: Ribonuclease HII (205 aa).

The RNase H type-2 domain maps to 22-205 (RFICGVDEAG…RKSFLKNILR (184 aa)). Aspartate 28, glutamate 29, and aspartate 120 together coordinate a divalent metal cation.

Belongs to the RNase HII family. Mn(2+) is required as a cofactor. The cofactor is Mg(2+).

The protein resides in the cytoplasm. The catalysed reaction is Endonucleolytic cleavage to 5'-phosphomonoester.. Its function is as follows. Endonuclease that specifically degrades the RNA of RNA-DNA hybrids. The polypeptide is Ribonuclease HII (Caldicellulosiruptor saccharolyticus (strain ATCC 43494 / DSM 8903 / Tp8T 6331)).